The chain runs to 637 residues: Biosynthetic arginine decarboxylase (637 aa).

Lys110 carries the N6-(pyridoxal phosphate)lysine modification. 290–300 (IDVGGGLGVDY) contributes to the substrate binding site.

This sequence belongs to the Orn/Lys/Arg decarboxylase class-II family. SpeA subfamily. Requires Mg(2+) as cofactor. Pyridoxal 5'-phosphate serves as cofactor.

The catalysed reaction is L-arginine + H(+) = agmatine + CO2. Catalyzes the biosynthesis of agmatine from arginine. This Pseudomonas putida (strain ATCC 47054 / DSM 6125 / CFBP 8728 / NCIMB 11950 / KT2440) protein is Biosynthetic arginine decarboxylase.